Reading from the N-terminus, the 382-residue chain is Solvent efflux pump periplasmic linker SrpA (382 aa).

The N-terminal stretch at 1–23 (MRQIRSPRALRVIPLTALMLISG) is a signal peptide. A lipid anchor (N-palmitoyl cysteine) is attached at C24. The S-diacylglycerol cysteine moiety is linked to residue C24. The stretch at 98 to 127 (RTYEAQLRRAEANRTSAQNLARRYETLLKT) forms a coiled coil.

The protein belongs to the membrane fusion protein (MFP) (TC 8.A.1) family.

Its subcellular location is the cell inner membrane. Functionally, the periplasmic linker protein component of an organic solvent efflux pump. Involved in export of a number of low log POW compounds including hexane (log POW 3.5), toluene (log POW 2.5) and dimethylphthalate (log POW 2.3). The solvent resistance phenotype has been postulated to depend on the operon expression level. In Pseudomonas putida (Arthrobacter siderocapsulatus), this protein is Solvent efflux pump periplasmic linker SrpA (srpA).